Consider the following 491-residue polypeptide: UDP-glycosyltransferase 73C1 (491 aa).

Residues serine 292, 352–354 (SPQ), 369–377 (HCGWNSTLE), and 391–394 (FGDQ) each bind UDP-alpha-D-glucose.

The protein belongs to the UDP-glycosyltransferase family.

Involved in the O-glucosylation of trans-zeatin and dihydrozeatin. Also active in vitro on cis-zeatin, dihydrozeatin-9-N-Glc, and olomoucine. Can detoxify the explosive 2,4,6-trinitrotoluene in plant by forming O- or C-glucose conjugates. The sequence is that of UDP-glycosyltransferase 73C1 (UGT73C1) from Arabidopsis thaliana (Mouse-ear cress).